The primary structure comprises 326 residues: Beta-ketoacyl-[acyl-carrier-protein] synthase III (326 aa).

Active-site residues include cysteine 112 and histidine 251. The segment at 252-256 is ACP-binding; the sequence is QANSR. The active site involves asparagine 281.

It belongs to the thiolase-like superfamily. FabH family. Homodimer.

Its subcellular location is the cytoplasm. It carries out the reaction malonyl-[ACP] + acetyl-CoA + H(+) = 3-oxobutanoyl-[ACP] + CO2 + CoA. It functions in the pathway lipid metabolism; fatty acid biosynthesis. Its function is as follows. Catalyzes the condensation reaction of fatty acid synthesis by the addition to an acyl acceptor of two carbons from malonyl-ACP. Catalyzes the first condensation reaction which initiates fatty acid synthesis and may therefore play a role in governing the total rate of fatty acid production. Possesses both acetoacetyl-ACP synthase and acetyl transacylase activities. Its substrate specificity determines the biosynthesis of branched-chain and/or straight-chain of fatty acids. In Clostridium botulinum (strain Kyoto / Type A2), this protein is Beta-ketoacyl-[acyl-carrier-protein] synthase III.